We begin with the raw amino-acid sequence, 675 residues long: 1,4-alpha-glucan branching enzyme TK1436 (675 aa).

The active-site Nucleophile is the Glu183. Substrate contacts are provided by Arg261 and Gly278. Catalysis depends on Asp354, which acts as the Proton donor. 3 residues coordinate substrate: Trp407, Asp467, and Gln476. Disordered stretches follow at residues 537–563 and 581–627; these read PELE…KVLT and EETR…LSIK. Basic and acidic residues-rich tracts occupy residues 549-563 and 581-595; these read PPEK…KVLT and EETR…EASK. The segment covering 596 to 616 has biased composition (basic residues); that stretch reads RGKRKSSKSKRLPRKVSKKAP.

Belongs to the glycosyl hydrolase 57 family. In terms of assembly, monomer.

The catalysed reaction is Transfers a segment of a (1-&gt;4)-alpha-D-glucan chain to a primary hydroxy group in a similar glucan chain.. In terms of biological role, catalyzes the formation of branch points in alpha-glucans by cleavage of an alpha-1,4 glycosidic bond and subsequent transfer of the cleaved-off oligosaccharide to a new alpha-1,6 position. The branch chain-length distribution of the reaction products shows degree of polymerization (DP) of 5 to 30, with two local maxima at DP 6 and DP 11. Exhibits an alpha-retaining catalytic mechanism. Does not display alpha-galactosidase or pullulanase activity, since melibiose and pullulan are not substrates. Is not able to catalyze the hydrolysis or transglycosylation of maltoheptaose, suggesting that the TK1436 protein contains neither alpha-amylase nor 4-alpha-glucanotransferase activity. The polypeptide is 1,4-alpha-glucan branching enzyme TK1436 (Thermococcus kodakarensis (strain ATCC BAA-918 / JCM 12380 / KOD1) (Pyrococcus kodakaraensis (strain KOD1))).